The primary structure comprises 748 residues: Elongation factor G, mitochondrial (748 aa).

The transit peptide at 1–14 (MTISSFLRVRHSLA) directs the protein to the mitochondrion. One can recognise a tr-type G domain in the interval 40-318 (ERIRNIGISA…VLNYLPHPGE (279 aa)). Residues 49-56 (AHIDSGKT), 116-120 (DTPGH), and 170-173 (NKLD) contribute to the GTP site.

It belongs to the TRAFAC class translation factor GTPase superfamily. Classic translation factor GTPase family. EF-G/EF-2 subfamily.

The protein localises to the mitochondrion. The protein operates within protein biosynthesis; polypeptide chain elongation. Its function is as follows. Mitochondrial GTPase that catalyzes the GTP-dependent ribosomal translocation step during translation elongation. During this step, the ribosome changes from the pre-translocational (PRE) to the post-translocational (POST) state as the newly formed A-site-bound peptidyl-tRNA and P-site-bound deacylated tRNA move to the P and E sites, respectively. Catalyzes the coordinated movement of the two tRNA molecules, the mRNA and conformational changes in the ribosome. This Aedes aegypti (Yellowfever mosquito) protein is Elongation factor G, mitochondrial.